A 126-amino-acid chain; its full sequence is MNRHKAREKAFQVLFQLDINETELEEVMETLKEKERYDVFLRSLVEGVIQHKSVIDEKISTHLEKWTIDRIASVERTILRMAILEIMYIDDIPQNVSINEAIELAHTFGDEQSGKFVNGVLSKIIA.

This sequence belongs to the NusB family.

Involved in transcription antitermination. Required for transcription of ribosomal RNA (rRNA) genes. Binds specifically to the boxA antiterminator sequence of the ribosomal RNA (rrn) operons. This Oceanobacillus iheyensis (strain DSM 14371 / CIP 107618 / JCM 11309 / KCTC 3954 / HTE831) protein is Transcription antitermination protein NusB.